The following is a 384-amino-acid chain: tRNA-specific 2-thiouridylase MnmA (384 aa).

Residues 9-16 (GMSGGVDS) and Met35 contribute to the ATP site. The interaction with target base in tRNA stretch occupies residues 95–97 (NPD). Cys100 (nucleophile) is an active-site residue. Cys100 and Cys196 are disulfide-bonded. Residue Gly124 coordinates ATP. Residues 146–148 (KDQ) are interaction with tRNA. Cys196 acts as the Cysteine persulfide intermediate in catalysis. Residues 308-309 (RY) are interaction with tRNA.

The protein belongs to the MnmA/TRMU family.

The protein resides in the cytoplasm. It catalyses the reaction S-sulfanyl-L-cysteinyl-[protein] + uridine(34) in tRNA + AH2 + ATP = 2-thiouridine(34) in tRNA + L-cysteinyl-[protein] + A + AMP + diphosphate + H(+). Its function is as follows. Catalyzes the 2-thiolation of uridine at the wobble position (U34) of tRNA, leading to the formation of s(2)U34. The chain is tRNA-specific 2-thiouridylase MnmA from Burkholderia ambifaria (strain ATCC BAA-244 / DSM 16087 / CCUG 44356 / LMG 19182 / AMMD) (Burkholderia cepacia (strain AMMD)).